The primary structure comprises 729 residues: Fatty acid oxidation complex subunit alpha (729 aa).

The interval 1–189 (MLYKGDTLYL…KIGLVDGVVK (189 aa)) is enoyl-CoA hydratase/isomerase. D296 contacts substrate. The tract at residues 311-729 (ETPKQAAVLG…ARPVGDLKTA (419 aa)) is 3-hydroxyacyl-CoA dehydrogenase. Residues M324, D343, 400 to 402 (VVE), K407, and S429 each bind NAD(+). H450 (for 3-hydroxyacyl-CoA dehydrogenase activity) is an active-site residue. N453 is an NAD(+) binding site. Substrate is bound by residues N500 and Y660. Residues 708–729 (RHNEPYYPPVEPARPVGDLKTA) are disordered.

It in the N-terminal section; belongs to the enoyl-CoA hydratase/isomerase family. In the C-terminal section; belongs to the 3-hydroxyacyl-CoA dehydrogenase family. In terms of assembly, heterotetramer of two alpha chains (FadB) and two beta chains (FadA).

The enzyme catalyses a (3S)-3-hydroxyacyl-CoA + NAD(+) = a 3-oxoacyl-CoA + NADH + H(+). It catalyses the reaction a (3S)-3-hydroxyacyl-CoA = a (2E)-enoyl-CoA + H2O. The catalysed reaction is a 4-saturated-(3S)-3-hydroxyacyl-CoA = a (3E)-enoyl-CoA + H2O. It carries out the reaction (3S)-3-hydroxybutanoyl-CoA = (3R)-3-hydroxybutanoyl-CoA. The enzyme catalyses a (3Z)-enoyl-CoA = a 4-saturated (2E)-enoyl-CoA. It catalyses the reaction a (3E)-enoyl-CoA = a 4-saturated (2E)-enoyl-CoA. It functions in the pathway lipid metabolism; fatty acid beta-oxidation. Its function is as follows. Involved in the aerobic and anaerobic degradation of long-chain fatty acids via beta-oxidation cycle. Catalyzes the formation of 3-oxoacyl-CoA from enoyl-CoA via L-3-hydroxyacyl-CoA. It can also use D-3-hydroxyacyl-CoA and cis-3-enoyl-CoA as substrate. In Escherichia coli (strain SMS-3-5 / SECEC), this protein is Fatty acid oxidation complex subunit alpha.